The following is a 275-amino-acid chain: Beta-lactamase OXA-3 (275 aa).

Residues methionine 1–alanine 21 form the signal peptide. The active-site Acyl-ester intermediate is serine 72. Lysine 75 carries the N6-carboxylysine modification. Lysine 210–glycine 212 lines the substrate pocket.

This sequence belongs to the class-D beta-lactamase family.

The catalysed reaction is a beta-lactam + H2O = a substituted beta-amino acid. This is an oxacillin-hydrolyzing beta-lactamase. The protein is Beta-lactamase OXA-3 (bla) of Pseudomonas aeruginosa.